The sequence spans 373 residues: tRNA-specific 2-thiouridylase MnmA (373 aa).

ATP is bound by residues Gly-12 to Ser-19 and Met-38. The segment at Asn-98–Asp-100 is interaction with target base in tRNA. The active-site Nucleophile is Cys-103. Cysteines 103 and 200 form a disulfide. Gly-127 contacts ATP. An interaction with tRNA region spans residues Lys-150–Gln-152. Cys-200 functions as the Cysteine persulfide intermediate in the catalytic mechanism. Residues Arg-312–Tyr-313 form an interaction with tRNA region.

It belongs to the MnmA/TRMU family.

It localises to the cytoplasm. It catalyses the reaction S-sulfanyl-L-cysteinyl-[protein] + uridine(34) in tRNA + AH2 + ATP = 2-thiouridine(34) in tRNA + L-cysteinyl-[protein] + A + AMP + diphosphate + H(+). Its function is as follows. Catalyzes the 2-thiolation of uridine at the wobble position (U34) of tRNA, leading to the formation of s(2)U34. The protein is tRNA-specific 2-thiouridylase MnmA of Streptococcus pyogenes serotype M1.